A 474-amino-acid polypeptide reads, in one-letter code: ABHD16B (474 aa).

The AB hydrolase-1 domain occupies 175–293; that stretch reads VICCEGNAGF…MPQSWKGLVV (119 aa). Residues Ser-248, Asp-323, and His-423 each act as charge relay system in the active site.

Belongs to the AB hydrolase superfamily. ABHD16 family.

The catalysed reaction is a 1,2-diacyl-sn-glycero-3-phospho-L-serine + H2O = a 2-acyl-sn-glycero-3-phospho-L-serine + a fatty acid + H(+). It catalyses the reaction a 1-acylglycerol + H2O = glycerol + a fatty acid + H(+). The enzyme catalyses 1-(9Z-octadecenoyl)-glycerol + H2O = glycerol + (9Z)-octadecenoate + H(+). Hydrolyzes the sn-1 position of glycerophospholipids with high specificity towards phosphatidylserine (PS), PS-PLA1 enzyme. Also hydrolyzes the acyl chain of glycerolipids with a preference for the monoacylglycerol (MAG) 1-acylglycerol, MAG lipase. Plays a regulatory role in cellular lipid homeostasis by modulating genes involved in neutral lipid degradation and in phospholipid synthesis and composition. The chain is ABHD16B from Rattus norvegicus (Rat).